The following is a 281-amino-acid chain: Tetraspanin-33 (281 aa).

At 1–23 (MGNAKRATQNDEDYTFVSPVVKY) the chain is on the cytoplasmic side. A helical membrane pass occupies residues 24–44 (LLFFFNMIFWIISLVLISIGV). Over 45–62 (YSRIVKHETALACLTVDP) the chain is Extracellular. The chain crosses the membrane as a helical span at residues 63 to 83 (ALILMVVGILMFFITFCGCVG). Over 84–94 (SLRENICLLQT) the chain is Cytoplasmic. Residues 95-115 (FCIFLTIMFLLQLLAGVLGFV) traverse the membrane as a helical segment. At 116 to 233 (FSDKARGKVT…DILVNWIHSN (118 aa)) the chain is on the extracellular side. Cystine bridges form between Cys154/Cys222, Cys155/Cys187, Cys171/Cys181, and Cys188/Cys201. An N-linked (GlcNAc...) asparagine glycan is attached at Asn170. A helical membrane pass occupies residues 234–254 (LFLLGGIALGLTIPQLVGILL). Over 255 to 281 (SQVLINQIQDQIKLQNYNQQHRSDPWS) the chain is Cytoplasmic.

The protein belongs to the tetraspanin (TM4SF) family. In terms of assembly, homodimer; disulfide-linked.

The protein resides in the cell membrane. It localises to the cell junction. The protein localises to the adherens junction. It is found in the cytoplasm. In terms of biological role, part of TspanC8 subgroup, composed of 6 members that interact with the transmembrane metalloprotease ADAM10. This interaction is required for ADAM10 exit from the endoplasmic reticulum and for enzymatic maturation and trafficking to the cell surface as well as substrate specificity. Different TspanC8/ADAM10 complexes have distinct substrates. The polypeptide is Tetraspanin-33 (tspan33) (Danio rerio (Zebrafish)).